The following is a 268-amino-acid chain: Interleukin-1 beta (268 aa).

A propeptide spanning residues 1-116 (MAEVPELASE…TRNNDACVHD (116 aa)) is cleaved from the precursor.

It belongs to the IL-1 family. Monomer. In its precursor form, weakly interacts with full-length MEFV; the mature cytokine does not interact at all. Interacts with integrins ITGAV:ITGBV and ITGA5:ITGB1; integrin-binding is required for IL1B signaling. Interacts with cargo receptor TMED10; the interaction is direct and is required for the secretion of IL1B mature form. Interacts with HSP90AB1; the interaction facilitates cargo translocation into the ERGIC. Interacts with HSP90B1; the interaction facilitates cargo translocation into the ERGIC.

It localises to the cytoplasm. The protein localises to the cytosol. Its subcellular location is the secreted. It is found in the lysosome. The protein resides in the extracellular exosome. Potent pro-inflammatory cytokine. Initially discovered as the major endogenous pyrogen, induces prostaglandin synthesis, neutrophil influx and activation, T-cell activation and cytokine production, B-cell activation and antibody production, and fibroblast proliferation and collagen production. Promotes Th17 differentiation of T-cells. Synergizes with IL12/interleukin-12 to induce IFNG synthesis from T-helper 1 (Th1) cells. Plays a role in angiogenesis by inducing VEGF production synergistically with TNF and IL6. Involved in transduction of inflammation downstream of pyroptosis: its mature form is specifically released in the extracellular milieu by passing through the gasdermin-D (GSDMD) pore. The chain is Interleukin-1 beta (IL1B) from Macaca fascicularis (Crab-eating macaque).